A 236-amino-acid polypeptide reads, in one-letter code: MEGLQRCFVLHYRPYSETSLILDVFSEDYGRLTILSKGARRKRSNLKGTLQPFTPLFMKWTGRGSMKTLTHAEPISISLPMRGYILYSAFYLNEVLVRVLENDTPYPVLFMDYLNALRELAQADNPEPALRRFELALLHHLGYGIDFLHCAGSGLPIDDLMTYHYREQKGFIASMMTGHFTFTGNQLLAIAARRFETPDQLKAAKRFTRIALKPYLGGKPLKSRELFIPRTRNIGK.

This sequence belongs to the RecO family.

In terms of biological role, involved in DNA repair and RecF pathway recombination. This Photobacterium profundum (strain SS9) protein is DNA repair protein RecO.